Consider the following 329-residue polypeptide: Malate dehydrogenase (329 aa).

12 to 18 is an NAD(+) binding site; sequence GAAGQIG. 2 residues coordinate substrate: Arg-93 and Arg-99. Residues Asn-106, Gln-113, and 130–132 each bind NAD(+); that span reads TGN. Residues Asn-132 and Arg-163 each coordinate substrate. His-188 functions as the Proton acceptor in the catalytic mechanism.

The protein belongs to the LDH/MDH superfamily. MDH type 2 family.

It catalyses the reaction (S)-malate + NAD(+) = oxaloacetate + NADH + H(+). Functionally, catalyzes the reversible oxidation of malate to oxaloacetate. In Mycobacterium leprae (strain TN), this protein is Malate dehydrogenase.